Here is a 116-residue protein sequence, read N- to C-terminus: Protein Rev (116 aa).

Ser-5 and Ser-8 each carry phosphoserine; by host CK2. Positions 18–26 (LIKVLYQSN) are homomultimerization. The segment at 23 to 48 (YQSNPPPSSEGTRQARRNRRRRWRER) is disordered. The Nuclear localization signal and RNA-binding (RRE) signature appears at 34–50 (TRQARRNRRRRWRERQR). Residues 36–47 (QARRNRRRRWRE) are compositionally biased toward basic residues. The short motif at 73–84 (FQLPPLERLTLD) is the Nuclear export signal and binding to XPO1 element. Residues 90–116 (GTSGTQGVGSPQILVESPPVLDSGTKE) form a disordered region. Ser-92 and Ser-99 each carry phosphoserine; by host.

Belongs to the HIV-1 REV protein family. Homomultimer; when bound to the RRE. Multimeric assembly is essential for activity and may involve XPO1. Binds to human KPNB1, XPO1, TNPO1, RANBP5 and IPO7. Interacts with the viral Integrase. Interacts with human KHDRBS1. Interacts with human NAP1; this interaction decreases Rev multimerization and stimulates its activity. Interacts with human DEAD-box helicases DDX3 and DDX24; these interactions may serve for viral RNA export to the cytoplasm and packaging, respectively. Interacts with human PSIP1; this interaction may inhibit HIV-1 DNA integration by promoting dissociation of the Integrase-LEDGF/p75 complex. Post-translationally, asymmetrically arginine dimethylated at one site by host PRMT6. Methylation impairs the RNA-binding activity and export of viral RNA from the nucleus to the cytoplasm. In terms of processing, phosphorylated by protein kinase CK2. Presence of, and maybe binding to the N-terminus of the regulatory beta subunit of CK2 is necessary for CK2-mediated Rev's phosphorylation.

Its subcellular location is the host nucleus. The protein resides in the host nucleolus. The protein localises to the host cytoplasm. Its function is as follows. Escorts unspliced or incompletely spliced viral pre-mRNAs (late transcripts) out of the nucleus of infected cells. These pre-mRNAs carry a recognition sequence called Rev responsive element (RRE) located in the env gene, that is not present in fully spliced viral mRNAs (early transcripts). This function is essential since most viral proteins are translated from unspliced or partially spliced pre-mRNAs which cannot exit the nucleus by the pathway used by fully processed cellular mRNAs. Rev itself is translated from a fully spliced mRNA that readily exits the nucleus. Rev's nuclear localization signal (NLS) binds directly to KPNB1/Importin beta-1 without previous binding to KPNA1/Importin alpha-1. KPNB1 binds to the GDP bound form of RAN (Ran-GDP) and targets Rev to the nucleus. In the nucleus, the conversion from Ran-GDP to Ran-GTP dissociates Rev from KPNB1 and allows Rev's binding to the RRE in viral pre-mRNAs. Rev multimerization on the RRE via cooperative assembly exposes its nuclear export signal (NES) to the surface. Rev can then form a complex with XPO1/CRM1 and Ran-GTP, leading to nuclear export of the complex. Conversion from Ran-GTP to Ran-GDP mediates dissociation of the Rev/RRE/XPO1/RAN complex, so that Rev can return to the nucleus for a subsequent round of export. Beside KPNB1, also seems to interact with TNPO1/Transportin-1, RANBP5/IPO5 and IPO7/RANBP7 for nuclear import. The nucleoporin-like HRB/RIP is an essential cofactor that probably indirectly interacts with Rev to release HIV RNAs from the perinuclear region to the cytoplasm. The sequence is that of Protein Rev from Human immunodeficiency virus type 1 group M subtype B (isolate YU-2) (HIV-1).